The chain runs to 201 residues: Xanthine phosphoribosyltransferase (201 aa).

Residues leucine 20 and asparagine 27 each contribute to the xanthine site. 129–133 (ANGQA) contributes to the 5-phospho-alpha-D-ribose 1-diphosphate binding site. Xanthine is bound at residue lysine 157.

Belongs to the purine/pyrimidine phosphoribosyltransferase family. Xpt subfamily. Homodimer.

The protein resides in the cytoplasm. The catalysed reaction is XMP + diphosphate = xanthine + 5-phospho-alpha-D-ribose 1-diphosphate. Its pathway is purine metabolism; XMP biosynthesis via salvage pathway; XMP from xanthine: step 1/1. Converts the preformed base xanthine, a product of nucleic acid breakdown, to xanthosine 5'-monophosphate (XMP), so it can be reused for RNA or DNA synthesis. The polypeptide is Xanthine phosphoribosyltransferase (Shouchella clausii (strain KSM-K16) (Alkalihalobacillus clausii)).